The sequence spans 275 residues: Large ribosomal subunit protein uL2 (275 aa).

Residues Arg212–Arg259 form a disordered region.

It belongs to the universal ribosomal protein uL2 family. As to quaternary structure, part of the 50S ribosomal subunit. Forms a bridge to the 30S subunit in the 70S ribosome.

Its function is as follows. One of the primary rRNA binding proteins. Required for association of the 30S and 50S subunits to form the 70S ribosome, for tRNA binding and peptide bond formation. It has been suggested to have peptidyltransferase activity; this is somewhat controversial. Makes several contacts with the 16S rRNA in the 70S ribosome. The sequence is that of Large ribosomal subunit protein uL2 from Acidobacterium capsulatum (strain ATCC 51196 / DSM 11244 / BCRC 80197 / JCM 7670 / NBRC 15755 / NCIMB 13165 / 161).